The chain runs to 681 residues: PWWP domain-containing DNA repair factor 3B (681 aa).

The span at 102 to 121 (NLSQESMSEEQPTATASENV) shows a compositional bias: polar residues. Disordered stretches follow at residues 102–144 (NLSQ…TQED), 166–200 (HTTGESMPSEMDTKATENLGCCQTDPSLADEDDKK), and 285–304 (QNQSSVESDVGAETSTAGCS). Ser-128 is modified (phosphoserine). Over residues 285–302 (QNQSSVESDVGAETSTAG) the composition is skewed to polar residues. In terms of domain architecture, PWWP spans 377–438 (TGMIVWFKYQ…KKYDCKEKQA (62 aa)).

The protein belongs to the PWWP3A family.

This is PWWP domain-containing DNA repair factor 3B (Pwwp3b) from Mus musculus (Mouse).